A 190-amino-acid polypeptide reads, in one-letter code: Nodulation protein L (190 aa).

Belongs to the transferase hexapeptide repeat family.

Acetyltransferase implicated in the O-acetylation of Nod factors. This Rhizobium leguminosarum bv. viciae protein is Nodulation protein L (nodL).